A 251-amino-acid chain; its full sequence is UDP-N-acetylglucosamine--dolichyl-phosphate N-acetylglucosaminyltransferase (251 aa).

Residues 150–167 traverse the membrane as a helical segment; sequence VGNLGLSFITFLLGGYYV.

The protein belongs to the glycosyltransferase 2 family.

Its subcellular location is the cell membrane. It carries out the reaction a di-trans,poly-cis-dolichyl phosphate + UDP-N-acetyl-alpha-D-glucosamine = an N-acetyl-alpha-D-glucosaminyl-phospho-di-trans,poly-cis-dolichol + UDP. It participates in cell surface structure biogenesis; S-layer biogenesis. It functions in the pathway protein modification; protein glycosylation. Functionally, involved in the assembly of an N-linked disaccharide that decorates the S-layer glycoprotein and flagellins. AglK initiates N-linked glycosylation through the formation of alpha-linked dolichyl monophosphate N-acetylglucosamine. It catalyzes the transfer of GlcNAc from the donor substrate UDP-GlcNAc to dolichyl phosphate C55 (Dol-P) to yield Dol-P-GlcNAc. AglK reaction proceeds with retention of stereochemistry. The reaction is specific for UDP-GlcNAc. AglK shows a stronger preference for short dolichol (C55-60 Dol-P) substrates compared with the longer (C85-105 Dol-P). This Methanococcus voltae protein is UDP-N-acetylglucosamine--dolichyl-phosphate N-acetylglucosaminyltransferase.